A 162-amino-acid chain; its full sequence is NADH-quinone oxidoreductase subunit I (162 aa).

4Fe-4S ferredoxin-type domains are found at residues 54-83 (RRYE…INST) and 93-122 (SSYE…ETNI). Positions 63, 66, 69, 73, 102, 105, 108, and 112 each coordinate [4Fe-4S] cluster.

It belongs to the complex I 23 kDa subunit family. NDH-1 is composed of 14 different subunits. Subunits NuoA, H, J, K, L, M, N constitute the membrane sector of the complex. It depends on [4Fe-4S] cluster as a cofactor.

Its subcellular location is the cell inner membrane. It carries out the reaction a quinone + NADH + 5 H(+)(in) = a quinol + NAD(+) + 4 H(+)(out). Functionally, NDH-1 shuttles electrons from NADH, via FMN and iron-sulfur (Fe-S) centers, to quinones in the respiratory chain. The immediate electron acceptor for the enzyme in this species is believed to be ubiquinone. Couples the redox reaction to proton translocation (for every two electrons transferred, four hydrogen ions are translocated across the cytoplasmic membrane), and thus conserves the redox energy in a proton gradient. The sequence is that of NADH-quinone oxidoreductase subunit I from Francisella tularensis subsp. holarctica (strain FTNF002-00 / FTA).